We begin with the raw amino-acid sequence, 254 residues long: Isoprenyl transferase (254 aa).

Residue Asp-12 is part of the active site. Position 12 (Asp-12) interacts with Mg(2+). Substrate-binding positions include 13–16 (GNGR), Trp-17, Arg-25, His-29, and 57–59 (SSE). Residue Asn-60 is the Proton acceptor of the active site. Substrate contacts are provided by residues Trp-61, Arg-63, Arg-180, and 186–188 (RLS). Mg(2+) is bound at residue Glu-199.

The protein belongs to the UPP synthase family. As to quaternary structure, homodimer. Mg(2+) serves as cofactor.

Catalyzes the condensation of isopentenyl diphosphate (IPP) with allylic pyrophosphates generating different type of terpenoids. This Brucella abortus biovar 1 (strain 9-941) protein is Isoprenyl transferase.